Reading from the N-terminus, the 319-residue chain is Protein SICKLE (319 aa).

Disordered stretches follow at residues 1–59 (MEDS…TQRF), 71–239 (SFKK…PGAE), and 262–299 (CSDA…SNQQ). 2 stretches are compositionally biased toward polar residues: residues 27–56 (TTGT…SFET) and 78–88 (PKQQYISSPSH). The span at 93–103 (PVPPQFPPSVP) shows a compositional bias: pro residues. Residues 185–210 (SYNNTPPQFSNYGRQNANWGGNTYPN) show a composition bias toward polar residues. The span at 228-238 (DGGRRPMEPGA) shows a compositional bias: basic and acidic residues. Polar residues predominate over residues 285–299 (SVTSEATHKTSSNQQ).

Interacts with ubiquitin thioesterases UBP12 and UBP13, and with protein phosphatase 2A subunits PP2AB1, PP2AB2, PP2A3, PP2A4, PP2AA1 and PP2AA2. In terms of tissue distribution, expressed in the shoot apical meristem (SAM), embryos, seedlings, root tips, and root and leaf primordia.

It localises to the nucleus. It is found in the cytoplasm. The protein localises to the cytosol. Functionally, involved in miRNAs and siRNAs biogenesis and thus promotes gene silencing. Modulates auxin (IAA) transport-related developmental programs by regulating protein phosphatase 2A (PP2As)-driven auxin efflux carrier PIN proteins recycling and polarity. Required during development. Necessary for abiotic stress (e.g. chilling and salt) tolerance. In Arabidopsis thaliana (Mouse-ear cress), this protein is Protein SICKLE.